The primary structure comprises 183 residues: ATP synthase subunit b, chloroplastic (183 aa).

Residues 28 to 48 (DIFEANVINILLLLFGLIYVL) form a helical membrane-spanning segment.

It belongs to the ATPase B chain family. As to quaternary structure, F-type ATPases have 2 components, F(1) - the catalytic core - and F(0) - the membrane proton channel. F(1) has five subunits: alpha(3), beta(3), gamma(1), delta(1), epsilon(1). F(0) has four main subunits: a(1), b(1), b'(1) and c(10-14). The alpha and beta chains form an alternating ring which encloses part of the gamma chain. F(1) is attached to F(0) by a central stalk formed by the gamma and epsilon chains, while a peripheral stalk is formed by the delta, b and b' chains.

The protein resides in the plastid. It localises to the chloroplast thylakoid membrane. Its function is as follows. F(1)F(0) ATP synthase produces ATP from ADP in the presence of a proton or sodium gradient. F-type ATPases consist of two structural domains, F(1) containing the extramembraneous catalytic core and F(0) containing the membrane proton channel, linked together by a central stalk and a peripheral stalk. During catalysis, ATP synthesis in the catalytic domain of F(1) is coupled via a rotary mechanism of the central stalk subunits to proton translocation. Component of the F(0) channel, it forms part of the peripheral stalk, linking F(1) to F(0). The polypeptide is ATP synthase subunit b, chloroplastic (Pyropia yezoensis (Susabi-nori)).